We begin with the raw amino-acid sequence, 580 residues long: UPF0329 protein ECU06_0080 (580 aa).

Residues 308-330 (RQKRREREMEKSMKELLRDEEKA) are compositionally biased toward basic and acidic residues. The segment at 308 to 384 (RQKRREREME…KTGKKSKGGR (77 aa)) is disordered. The span at 331 to 340 (KSKKGRKKKS) shows a compositional bias: basic residues. Over residues 351–363 (SETEEVEASEEME) the composition is skewed to acidic residues. A compositionally biased stretch (basic residues) spans 372 to 384 (ARRKTGKKSKGGR).

The protein belongs to the UPF0329 family.

In Encephalitozoon cuniculi (strain GB-M1) (Microsporidian parasite), this protein is UPF0329 protein ECU06_0080.